Consider the following 190-residue polypeptide: ATP-dependent Clp protease proteolytic subunit 2 (190 aa).

S98 functions as the Nucleophile in the catalytic mechanism. H123 is an active-site residue.

Belongs to the peptidase S14 family. Fourteen ClpP subunits assemble into 2 heptameric rings which stack back to back to give a disk-like structure with a central cavity, resembling the structure of eukaryotic proteasomes.

Its subcellular location is the cytoplasm. The catalysed reaction is Hydrolysis of proteins to small peptides in the presence of ATP and magnesium. alpha-casein is the usual test substrate. In the absence of ATP, only oligopeptides shorter than five residues are hydrolyzed (such as succinyl-Leu-Tyr-|-NHMec, and Leu-Tyr-Leu-|-Tyr-Trp, in which cleavage of the -Tyr-|-Leu- and -Tyr-|-Trp bonds also occurs).. Functionally, cleaves peptides in various proteins in a process that requires ATP hydrolysis. Has a chymotrypsin-like activity. Plays a major role in the degradation of misfolded proteins. This Bacillus licheniformis (strain ATCC 14580 / DSM 13 / JCM 2505 / CCUG 7422 / NBRC 12200 / NCIMB 9375 / NCTC 10341 / NRRL NRS-1264 / Gibson 46) protein is ATP-dependent Clp protease proteolytic subunit 2.